We begin with the raw amino-acid sequence, 777 residues long: Rho-GTPase-activating protein 8 (777 aa).

The F-BAR domain maps to S3–D420. The stretch at Q117–I172 forms a coiled coil. The DEP domain occupies V213–G296. A Rho-GAP domain is found at V454–F650. Residues L667–S709 are disordered. Over residues Y668–S692 the composition is skewed to polar residues. A phosphoserine mark is found at S676 and S680. Residue T682 is modified to Phosphothreonine. S686 is subject to Phosphoserine. T694 carries the post-translational modification Phosphothreonine. Position 698 is a phosphoserine (S698).

In terms of assembly, interacts with pak1/shk1. In terms of processing, phosphorylated by pak1/shk1.

Its subcellular location is the cytoplasm. Functionally, acts in signal transduction. Negatively regulates the pak1/shk1 control pathway. The sequence is that of Rho-GTPase-activating protein 8 (rga8) from Schizosaccharomyces pombe (strain 972 / ATCC 24843) (Fission yeast).